A 537-amino-acid chain; its full sequence is Glutamyl-tRNA(Gln) amidotransferase subunit A, chloroplastic/mitochondrial (537 aa).

Catalysis depends on charge relay system residues K116 and S191. S215 serves as the catalytic Acyl-ester intermediate.

The protein belongs to the amidase family. GatA subfamily. In terms of assembly, subunit of the heterotrimeric GatCAB amidotransferase (AdT) complex, composed of A, B and C subunits.

The protein localises to the mitochondrion. It is found in the plastid. Its subcellular location is the chloroplast stroma. The catalysed reaction is L-glutamyl-tRNA(Gln) + L-glutamine + ATP + H2O = L-glutaminyl-tRNA(Gln) + L-glutamate + ADP + phosphate + H(+). In terms of biological role, allows the formation of correctly charged Gln-tRNA(Gln) through the transamidation of misacylated Glu-tRNA(Gln) in chloroplasts and mitochondria. The reaction takes place in the presence of glutamine and ATP through an activated gamma-phospho-Glu-tRNA(Gln). In Arabidopsis thaliana (Mouse-ear cress), this protein is Glutamyl-tRNA(Gln) amidotransferase subunit A, chloroplastic/mitochondrial.